Reading from the N-terminus, the 697-residue chain is Potassium-transporting ATPase ATP-binding subunit (697 aa).

The next 4 membrane-spanning stretches (helical) occupy residues 55–75 (PIMF…FFPS), 79–99 (SIPG…VLFA), 245–265 (LTLI…YLGF), and 271–291 (VLVA…LSAI). Asp-324 acts as the 4-aspartylphosphate intermediate in catalysis. Residues Asp-361, Glu-365, 393-400 (FKAETRMS), and Lys-412 each bind ATP. Mg(2+)-binding residues include Asp-535 and Asp-539. The next 3 membrane-spanning stretches (helical) occupy residues 605–625 (FAII…LNIM), 633–653 (AILS…PLAM), and 677–697 (GGVI…GLFI).

Belongs to the cation transport ATPase (P-type) (TC 3.A.3) family. Type IA subfamily. As to quaternary structure, the system is composed of three essential subunits: KdpA, KdpB and KdpC.

Its subcellular location is the cell membrane. It carries out the reaction K(+)(out) + ATP + H2O = K(+)(in) + ADP + phosphate + H(+). Its function is as follows. Part of the high-affinity ATP-driven potassium transport (or Kdp) system, which catalyzes the hydrolysis of ATP coupled with the electrogenic transport of potassium into the cytoplasm. This subunit is responsible for energy coupling to the transport system and for the release of the potassium ions to the cytoplasm. The polypeptide is Potassium-transporting ATPase ATP-binding subunit (Bacillus cereus (strain AH820)).